We begin with the raw amino-acid sequence, 473 residues long: Pentatricopeptide repeat-containing protein At3g60050 (473 aa).

PPR repeat units follow at residues 148 to 182 (TVNS…GFPT), 183 to 217 (TART…NYRP), 218 to 252 (FKHS…GFSP), 253 to 287 (DVLT…GFSP), 288 to 322 (DSYT…GIDP), 323 to 357 (SVLH…GCRP), 358 to 392 (DVVC…GQLP), 393 to 427 (NVFT…GCNP), and 428 to 462 (NFVV…GHYV).

The protein belongs to the PPR family. P subfamily.

This is Pentatricopeptide repeat-containing protein At3g60050 from Arabidopsis thaliana (Mouse-ear cress).